The sequence spans 58 residues: Small ribosomal subunit protein bS21 (58 aa).

A disordered region spans residues 39-58 (DKPSVKKRAKSKAAAKYRSR). The span at 43–58 (VKKRAKSKAAAKYRSR) shows a compositional bias: basic residues.

The protein belongs to the bacterial ribosomal protein bS21 family.

The sequence is that of Small ribosomal subunit protein bS21 from Chlamydia abortus (strain DSM 27085 / S26/3) (Chlamydophila abortus).